The following is a 78-amino-acid chain: Conotoxin 5 (78 aa).

Positions 1–22 are cleaved as a signal peptide; that stretch reads MKLTCMMIVTVLFLTAWIFITA. Positions 23 to 49 are excised as a propeptide; sequence DNSRNGIENLPRMRRHEMKNPKASKLN. Cystine bridges form between cysteine 53–cysteine 69, cysteine 60–cysteine 73, and cysteine 68–cysteine 77.

Belongs to the conotoxin O1 superfamily. Expressed by the venom duct.

The protein resides in the secreted. This chain is Conotoxin 5, found in Conus imperialis (Imperial cone).